The primary structure comprises 183 residues: uncharacterized protein (183 aa).

The protein belongs to the asfivirus S183L family.

This is an uncharacterized protein from Ornithodoros (relapsing fever ticks).